We begin with the raw amino-acid sequence, 696 residues long: Glycine--tRNA ligase beta subunit (696 aa).

It belongs to the class-II aminoacyl-tRNA synthetase family. As to quaternary structure, tetramer of two alpha and two beta subunits.

It localises to the cytoplasm. The catalysed reaction is tRNA(Gly) + glycine + ATP = glycyl-tRNA(Gly) + AMP + diphosphate. The sequence is that of Glycine--tRNA ligase beta subunit from Oleidesulfovibrio alaskensis (strain ATCC BAA-1058 / DSM 17464 / G20) (Desulfovibrio alaskensis).